The primary structure comprises 671 residues: DNA ligase (671 aa).

Residues 32–36 (DAEYD), 81–82 (SL), and Glu-113 contribute to the NAD(+) site. Lys-115 serves as the catalytic N6-AMP-lysine intermediate. Arg-136, Glu-173, Lys-290, and Lys-314 together coordinate NAD(+). The Zn(2+) site is built by Cys-408, Cys-411, Cys-426, and Cys-432. The 79-residue stretch at 593-671 (EIDSPFAGKT…EAEMLRLLGS (79 aa)) folds into the BRCT domain.

This sequence belongs to the NAD-dependent DNA ligase family. LigA subfamily. It depends on Mg(2+) as a cofactor. Mn(2+) is required as a cofactor.

It carries out the reaction NAD(+) + (deoxyribonucleotide)n-3'-hydroxyl + 5'-phospho-(deoxyribonucleotide)m = (deoxyribonucleotide)n+m + AMP + beta-nicotinamide D-nucleotide.. Its function is as follows. DNA ligase that catalyzes the formation of phosphodiester linkages between 5'-phosphoryl and 3'-hydroxyl groups in double-stranded DNA using NAD as a coenzyme and as the energy source for the reaction. It is essential for DNA replication and repair of damaged DNA. The polypeptide is DNA ligase (Escherichia coli O7:K1 (strain IAI39 / ExPEC)).